The primary structure comprises 205 residues: Probable GTP-binding protein EngB (205 aa).

The 175-residue stretch at 29–203 folds into the EngB-type G domain; it reads QGAEIAFIGR…KAVLSQWFRS (175 aa). GTP contacts are provided by residues 37 to 44, 64 to 68, 82 to 85, 149 to 152, and 182 to 184; these read GRSNAGKS, GRTQM, DLPG, TKSD, and FSS. Serine 44 and threonine 66 together coordinate Mg(2+).

Belongs to the TRAFAC class TrmE-Era-EngA-EngB-Septin-like GTPase superfamily. EngB GTPase family. Mg(2+) serves as cofactor.

In terms of biological role, necessary for normal cell division and for the maintenance of normal septation. This chain is Probable GTP-binding protein EngB, found in Coxiella burnetii (strain RSA 493 / Nine Mile phase I).